We begin with the raw amino-acid sequence, 149 residues long: Large ribosomal subunit protein bL9 (149 aa).

It belongs to the bacterial ribosomal protein bL9 family.

Binds to the 23S rRNA. The chain is Large ribosomal subunit protein bL9 from Dichelobacter nodosus (strain VCS1703A).